A 653-amino-acid polypeptide reads, in one-letter code: Probable sulfate transporter 3.4 (653 aa).

The Cytoplasmic portion of the chain corresponds to 1–92 (MGHGTNRVED…QYDLKLLRSD (92 aa)). Residues 93–113 (VISGLTIASLAIPQGISYAKL) form a helical membrane-spanning segment. The Extracellular portion of the chain corresponds to 114-115 (AN). A helical transmembrane segment spans residues 116–136 (LPPIVGLYSSFVPPLIYAVLG). Residues 137–140 (SSRH) are Cytoplasmic-facing. The chain crosses the membrane as a helical span at residues 141–161 (LAVGPVSIASLVMGSMLSESV). The Extracellular segment spans residues 162 to 167 (SPTQDS). A helical membrane pass occupies residues 168–188 (ILYLKLAFTSTFFAGVFQASL). Topologically, residues 189–194 (GLLRLG) are cytoplasmic. Residues 195-215 (FMIDFLSKATLIGFTAGAAVI) form a helical membrane-spanning segment. The Extracellular portion of the chain corresponds to 216-247 (VSLQQLKGLLGIVHFTGKMQIVPVMSSVFNHR). The helical transmembrane segment at 248 to 268 (SEWSWETIVMGIGFLSILLTT) threads the bilayer. At 269 to 279 (RHISMRKPKLF) the chain is on the cytoplasmic side. Residues 280 to 300 (WISAASPLASVIISTLLVYLI) form a helical membrane-spanning segment. Residues 301–331 (RSKTHAISFIGHLPKGLNPPSLNMLYFSGAH) lie on the Extracellular side of the membrane. Residues 332 to 352 (LALAIKTGIITGILSLTEGIA) traverse the membrane as a helical segment. Residues 353 to 370 (VGRTFASLKNYQVNGNKE) are Cytoplasmic-facing. A helical membrane pass occupies residues 371-391 (MMAIGFMNMAGSCTSCYVTTG). Residues 392–407 (SFSRSAVNYNAGAKTA) lie on the Extracellular side of the membrane. The chain crosses the membrane as a helical span at residues 408–428 (VSNIVMASAVLVTLLFLMPLF). The Cytoplasmic portion of the chain corresponds to 429-433 (YYTPN). The helical transmembrane segment at 434–454 (VILAAIILTAVIGLIDYQAAY) threads the bilayer. Over 455–471 (KLWKVDKFDFFTCLCSF) the chain is Extracellular. A helical membrane pass occupies residues 472-492 (FGVLFVSVPLGLAIAVAVSVI). Residues 493–653 (KILLHVTRPN…SSTWKANGQP (161 aa)) are Cytoplasmic-facing. The STAS domain maps to 520-643 (RYREASRIPG…LTVGEAVADL (124 aa)).

Belongs to the SLC26A/SulP transporter (TC 2.A.53) family.

Its subcellular location is the membrane. H(+)/sulfate cotransporter that may play a role in the regulation of sulfate assimilation. The sequence is that of Probable sulfate transporter 3.4 (SULTR3;4) from Arabidopsis thaliana (Mouse-ear cress).